A 198-amino-acid chain; its full sequence is Endonuclease V (198 aa).

Residues D38 and D101 each coordinate Mg(2+).

This sequence belongs to the endonuclease V family. Requires Mg(2+) as cofactor.

The protein localises to the cytoplasm. It carries out the reaction Endonucleolytic cleavage at apurinic or apyrimidinic sites to products with a 5'-phosphate.. DNA repair enzyme involved in the repair of deaminated bases. Selectively cleaves double-stranded DNA at the second phosphodiester bond 3' to a deoxyinosine leaving behind the intact lesion on the nicked DNA. In Saccharolobus islandicus (strain M.16.27) (Sulfolobus islandicus), this protein is Endonuclease V.